Consider the following 132-residue polypeptide: Profilin (132 aa).

The protein belongs to the profilin family. Occurs in many kinds of cells as a complex with monomeric actin in a 1:1 ratio.

The protein localises to the cytoplasm. Its subcellular location is the cytoskeleton. Binds to actin and affects the structure of the cytoskeleton. At high concentrations, profilin prevents the polymerization of actin, whereas it enhances it at low concentrations. By binding to PIP2, it inhibits the formation of IP3 and DG. The sequence is that of Profilin from Naegleria pringsheimi (Amoeba).